The primary structure comprises 58 residues: Large ribosomal subunit protein uL30 (58 aa).

Belongs to the universal ribosomal protein uL30 family. As to quaternary structure, part of the 50S ribosomal subunit.

The sequence is that of Large ribosomal subunit protein uL30 from Pseudomonas putida (strain W619).